The chain runs to 102 residues: Small ribosomal subunit protein uS10c (102 aa).

The protein belongs to the universal ribosomal protein uS10 family. In terms of assembly, part of the 30S ribosomal subunit.

Its subcellular location is the plastid. The protein localises to the chloroplast. In terms of biological role, involved in the binding of tRNA to the ribosomes. The sequence is that of Small ribosomal subunit protein uS10c from Guillardia theta (Cryptophyte).